Here is a 263-residue protein sequence, read N- to C-terminus: UPF0739 protein C1orf74 homolog (263 aa).

It belongs to the UPF0739 family.

The chain is UPF0739 protein C1orf74 homolog from Xenopus tropicalis (Western clawed frog).